Consider the following 60-residue polypeptide: uncharacterized protein (60 aa).

Residues 11–33 form a helical membrane-spanning segment; it reads VFTVGFITGGVTPVMVSFVWPAA. Asparagine 40 and asparagine 57 each carry an N-linked (GlcNAc...) asparagine; by host glycan.

Its subcellular location is the host membrane. This is an uncharacterized protein from African swine fever virus (strain Badajoz 1971 Vero-adapted) (Ba71V).